A 309-amino-acid chain; its full sequence is tRNA dimethylallyltransferase (309 aa).

Residue 10–17 (GPTASGKT) coordinates ATP. 12 to 17 (TASGKT) serves as a coordination point for substrate. Interaction with substrate tRNA regions lie at residues 35-38 (DSAL) and 240-245 (RCVGYR).

The protein belongs to the IPP transferase family. In terms of assembly, monomer. The cofactor is Mg(2+).

The enzyme catalyses adenosine(37) in tRNA + dimethylallyl diphosphate = N(6)-dimethylallyladenosine(37) in tRNA + diphosphate. In terms of biological role, catalyzes the transfer of a dimethylallyl group onto the adenine at position 37 in tRNAs that read codons beginning with uridine, leading to the formation of N6-(dimethylallyl)adenosine (i(6)A). This Baumannia cicadellinicola subsp. Homalodisca coagulata protein is tRNA dimethylallyltransferase.